The sequence spans 350 residues: Enoyl-[acyl-carrier-protein] reductase, mitochondrial (350 aa).

The transit peptide at 1 to 14 (MNSTRNIISLVRRY) directs the protein to the mitochondrion. Y69 functions as the Proton donor in the catalytic mechanism. NADP(+) is bound by residues N143, 169-172 (NSMV), 192-194 (RDG), 261-264 (YGGM), 286-288 (FWL), and K343.

The protein belongs to the zinc-containing alcohol dehydrogenase family. Quinone oxidoreductase subfamily. In terms of assembly, homodimer.

It localises to the mitochondrion. It catalyses the reaction a 2,3-saturated acyl-[ACP] + NADP(+) = a (2E)-enoyl-[ACP] + NADPH + H(+). Its function is as follows. Catalyzes the NADPH-dependent reduction of trans-2-enoyl thioesters in mitochondrial fatty acid synthesis (fatty acid synthesis type II). Fatty acid chain elongation in mitochondria uses acyl carrier protein (ACP) as an acyl group carrier, but the enzyme accepts both ACP and CoA thioesters as substrates in vitro. This Dictyostelium discoideum (Social amoeba) protein is Enoyl-[acyl-carrier-protein] reductase, mitochondrial (mecr).